The chain runs to 403 residues: Tyrosine--tRNA ligase (403 aa).

A 'HIGH' region motif is present at residues 42 to 51; the sequence is PTAPDLHLGH. The 'KMSKS' region signature appears at 226-230; the sequence is KMSKS. K229 contacts ATP. Residues 339-400 enclose the S4 RNA-binding domain; it reads LRLAGLLTAA…GKRNFARVLL (62 aa).

Belongs to the class-I aminoacyl-tRNA synthetase family. TyrS type 2 subfamily. Homodimer.

Its subcellular location is the cytoplasm. It carries out the reaction tRNA(Tyr) + L-tyrosine + ATP = L-tyrosyl-tRNA(Tyr) + AMP + diphosphate + H(+). Its function is as follows. Catalyzes the attachment of tyrosine to tRNA(Tyr) in a two-step reaction: tyrosine is first activated by ATP to form Tyr-AMP and then transferred to the acceptor end of tRNA(Tyr). The sequence is that of Tyrosine--tRNA ligase from Xanthomonas euvesicatoria pv. vesicatoria (strain 85-10) (Xanthomonas campestris pv. vesicatoria).